The chain runs to 436 residues: 3-ketoacyl-CoA thiolase (436 aa).

Cysteine 99 (acyl-thioester intermediate) is an active-site residue. Catalysis depends on proton acceptor residues histidine 392 and cysteine 422.

It belongs to the thiolase-like superfamily. Thiolase family. Heterotetramer of two alpha chains (FadJ) and two beta chains (FadI).

It localises to the cytoplasm. It carries out the reaction an acyl-CoA + acetyl-CoA = a 3-oxoacyl-CoA + CoA. The protein operates within lipid metabolism; fatty acid beta-oxidation. In terms of biological role, catalyzes the final step of fatty acid oxidation in which acetyl-CoA is released and the CoA ester of a fatty acid two carbons shorter is formed. In Salmonella paratyphi B (strain ATCC BAA-1250 / SPB7), this protein is 3-ketoacyl-CoA thiolase.